The sequence spans 346 residues: Holliday junction branch migration complex subunit RuvB (346 aa).

The segment at 1–182 (MSERLVTSNE…LGVLCSMEYY (182 aa)) is large ATPase domain (RuvB-L). ATP-binding positions include L21, R22, G63, K66, T67, T68, 129-131 (EDY), R172, Y182, and R219. Mg(2+) is bound at residue T67. The tract at residues 183–253 (TDEQLKEIII…AAKKSLEILE (71 aa)) is small ATPAse domain (RuvB-S). The interval 256–346 (GEGFDRIDNK…DSKQCTLFEK (91 aa)) is head domain (RuvB-H). DNA-binding residues include R311 and R316.

The protein belongs to the RuvB family. As to quaternary structure, homohexamer. Forms an RuvA(8)-RuvB(12)-Holliday junction (HJ) complex. HJ DNA is sandwiched between 2 RuvA tetramers; dsDNA enters through RuvA and exits via RuvB. An RuvB hexamer assembles on each DNA strand where it exits the tetramer. Each RuvB hexamer is contacted by two RuvA subunits (via domain III) on 2 adjacent RuvB subunits; this complex drives branch migration. In the full resolvosome a probable DNA-RuvA(4)-RuvB(12)-RuvC(2) complex forms which resolves the HJ.

The protein resides in the cytoplasm. It catalyses the reaction ATP + H2O = ADP + phosphate + H(+). The RuvA-RuvB-RuvC complex processes Holliday junction (HJ) DNA during genetic recombination and DNA repair, while the RuvA-RuvB complex plays an important role in the rescue of blocked DNA replication forks via replication fork reversal (RFR). RuvA specifically binds to HJ cruciform DNA, conferring on it an open structure. The RuvB hexamer acts as an ATP-dependent pump, pulling dsDNA into and through the RuvAB complex. RuvB forms 2 homohexamers on either side of HJ DNA bound by 1 or 2 RuvA tetramers; 4 subunits per hexamer contact DNA at a time. Coordinated motions by a converter formed by DNA-disengaged RuvB subunits stimulates ATP hydrolysis and nucleotide exchange. Immobilization of the converter enables RuvB to convert the ATP-contained energy into a lever motion, pulling 2 nucleotides of DNA out of the RuvA tetramer per ATP hydrolyzed, thus driving DNA branch migration. The RuvB motors rotate together with the DNA substrate, which together with the progressing nucleotide cycle form the mechanistic basis for DNA recombination by continuous HJ branch migration. Branch migration allows RuvC to scan DNA until it finds its consensus sequence, where it cleaves and resolves cruciform DNA. The chain is Holliday junction branch migration complex subunit RuvB from Clostridium perfringens (strain 13 / Type A).